Consider the following 163-residue polypeptide: Lipoprotein signal peptidase (163 aa).

3 helical membrane-spanning segments follow: residues 11–31 (ILIAVFVVIFDQVTKYIIATT), 63–83 (KMTFFFIITIIILIALVYFFI), and 88–108 (YNLFMQVAISLLFAGALGNFI). Catalysis depends on residues Asp-118 and Asp-136. A helical membrane pass occupies residues 131 to 151 (IFNIADSSLTIGVILIIIALL).

It belongs to the peptidase A8 family.

Its subcellular location is the cell membrane. The enzyme catalyses Release of signal peptides from bacterial membrane prolipoproteins. Hydrolyzes -Xaa-Yaa-Zaa-|-(S,diacylglyceryl)Cys-, in which Xaa is hydrophobic (preferably Leu), and Yaa (Ala or Ser) and Zaa (Gly or Ala) have small, neutral side chains.. Its pathway is protein modification; lipoprotein biosynthesis (signal peptide cleavage). This protein specifically catalyzes the removal of signal peptides from prolipoproteins. This chain is Lipoprotein signal peptidase, found in Staphylococcus aureus.